The chain runs to 305 residues: ATP synthase F(0) complex subunit B2, mitochondrial (305 aa).

The transit peptide at 1-22 (MSLSRCLPLGQNARVIIIPARL) directs the protein to the mitochondrion.

The protein belongs to the eukaryotic ATPase B chain family. In terms of assembly, subunit of the F-type ATPase which has 2 components, CF(1) - the catalytic core - and CF(0) - the membrane proton channel.

It is found in the mitochondrion. The protein resides in the mitochondrion inner membrane. Mitochondrial membrane ATP synthase (F(1)F(0) ATP synthase or Complex V) produces ATP from ADP in the presence of a proton gradient across the membrane which is generated by electron transport complexes of the respiratory chain. F-type ATPases consist of two structural domains, F(1) - containing the extramembraneous catalytic core, and F(0) - containing the membrane proton channel, linked together by a central stalk and a peripheral stalk. During catalysis, ATP synthesis in the catalytic domain of F(1) is coupled via a rotary mechanism of the central stalk subunits to proton translocation. Part of the complex F(0) domain and the peripheric stalk, which acts as a stator to hold the subunits of the catalytic subcomplexes relative to the rotary elements. Plays a role in somatic development. Does not play a role in germline development. The chain is ATP synthase F(0) complex subunit B2, mitochondrial from Caenorhabditis elegans.